We begin with the raw amino-acid sequence, 248 residues long: Adenosylcobinamide-GDP ribazoletransferase (248 aa).

The next 8 membrane-spanning stretches (helical) occupy residues 3 to 23, 35 to 55, 63 to 83, 109 to 129, 135 to 155, 180 to 199, 200 to 219, and 228 to 248; these read ELKA…PINI, SYFP…YLLL, IVMT…HIDG, LGTN…LFLS, LLFS…VFSI, FVIA…PLKD, LALL…KYIS, and DTLG…FSIL.

The protein belongs to the CobS family. Mg(2+) serves as cofactor.

The protein localises to the cell membrane. It carries out the reaction alpha-ribazole + adenosylcob(III)inamide-GDP = adenosylcob(III)alamin + GMP + H(+). It catalyses the reaction alpha-ribazole 5'-phosphate + adenosylcob(III)inamide-GDP = adenosylcob(III)alamin 5'-phosphate + GMP + H(+). It functions in the pathway cofactor biosynthesis; adenosylcobalamin biosynthesis; adenosylcobalamin from cob(II)yrinate a,c-diamide: step 7/7. Functionally, joins adenosylcobinamide-GDP and alpha-ribazole to generate adenosylcobalamin (Ado-cobalamin). Also synthesizes adenosylcobalamin 5'-phosphate from adenosylcobinamide-GDP and alpha-ribazole 5'-phosphate. The protein is Adenosylcobinamide-GDP ribazoletransferase of Caldanaerobacter subterraneus subsp. tengcongensis (strain DSM 15242 / JCM 11007 / NBRC 100824 / MB4) (Thermoanaerobacter tengcongensis).